We begin with the raw amino-acid sequence, 416 residues long: Phosphoglycerate kinase (416 aa).

(2R)-3-phosphoglycerate is bound by residues valine 23, aspartate 24, phenylalanine 25, asparagine 26, arginine 39, serine 62, histidine 63, glycine 65, arginine 66, leucine 121, arginine 122, histidine 169, and arginine 170. Glycine 213 serves as a coordination point for ADP. Position 213 (glycine 213) interacts with CDP. AMP contacts are provided by alanine 214 and lysine 215. ATP is bound at residue alanine 214. Alanine 214 is a Mg(2+) binding site. Aspartate 218 serves as a coordination point for CDP. Aspartate 218 contributes to the Mg(2+) binding site. Lysine 219 is an AMP binding site. Residue lysine 219 coordinates ATP. Glycine 237 serves as a coordination point for ADP. Position 237 (glycine 237) interacts with CDP. AMP is bound by residues glycine 238 and glycine 312. The ATP site is built by glycine 238 and glycine 312. CDP-binding residues include glycine 337 and phenylalanine 342. Residue phenylalanine 342 coordinates ADP. Residue glutamate 343 participates in AMP binding. ATP-binding residues include glutamate 343, aspartate 374, and threonine 375. Residue aspartate 374 coordinates Mg(2+).

It belongs to the phosphoglycerate kinase family. In terms of assembly, monomer. It depends on Mg(2+) as a cofactor.

Its subcellular location is the cytoplasm. The protein localises to the mitochondrion. The catalysed reaction is (2R)-3-phosphoglycerate + ATP = (2R)-3-phospho-glyceroyl phosphate + ADP. The protein operates within carbohydrate degradation; glycolysis; pyruvate from D-glyceraldehyde 3-phosphate: step 2/5. Catalyzes one of the two ATP producing reactions in the glycolytic pathway via the reversible conversion of 1,3-diphosphoglycerate to 3-phosphoglycerate. Both L- and D- forms of purine and pyrimidine nucleotides can be used as substrates, but the activity is much lower on pyrimidines. Negatively regulates the biosynthesis of acetyl-CoA from pyruvate in the mitochondrion. The chain is Phosphoglycerate kinase (pgkA) from Agaricus bisporus (White button mushroom).